We begin with the raw amino-acid sequence, 120 residues long: Cell cycle protein GpsB (120 aa).

Residues 32-68 (LDDIIKDYETYAALVKELREENRRLKEELAAKPVEKA) adopt a coiled-coil conformation. Residues 63–88 (KPVEKAPVQPTQPVQSTQATQSTVES) form a disordered region. Over residues 68–86 (APVQPTQPVQSTQATQSTV) the composition is skewed to low complexity.

Belongs to the GpsB family. Forms polymers through the coiled coil domains. Interacts with PBP1, MreC and EzrA.

The protein localises to the cytoplasm. Divisome component that associates with the complex late in its assembly, after the Z-ring is formed, and is dependent on DivIC and PBP2B for its recruitment to the divisome. Together with EzrA, is a key component of the system that regulates PBP1 localization during cell cycle progression. Its main role could be the removal of PBP1 from the cell pole after pole maturation is completed. Also contributes to the recruitment of PBP1 to the division complex. Not essential for septum formation. The polypeptide is Cell cycle protein GpsB (Streptococcus sanguinis (strain SK36)).